A 404-amino-acid chain; its full sequence is MREVPHVLGIVLAGGEGKRLYPLTADRAKPAVPFGGAYRLIDFVLSNLVNARYLRICVLTQYKSHSLDRHISQNWRLSGLAGEYITPVPAQQRLGPRWYTGSADAIYQSLNLIYDEDPDYIVVFGADHVYRMDPEQMVRFHIDSGAGATVAGIRVPRENATAFGCIDADDSGRIRSFVEKPLEPPGTPDDPDTTFVSMGNYIFTTKVLIDAIRADADDDHSDHDMGGDIVPRLVADGMAAVYDFSDNEVPGATDRDRAYWRDVGTLDAFYDAHMDLVSVHPVFNLYNKRWPIRGESENLAPAKFVNGGSAQESVVGAGSIISAASVRNSVLSSNVVVDDGAIVEGSVIMPGTRVGRGAVVRHAILDKNVVVGPGEMVGVDLEKDRERFAISAGGVVAVGKGVWI.

Residues Tyr99, Gly164, 179-180 (EK), and Ser197 contribute to the alpha-D-glucose 1-phosphate site.

The protein belongs to the bacterial/plant glucose-1-phosphate adenylyltransferase family.

It catalyses the reaction alpha-D-glucose 1-phosphate + ATP + H(+) = ADP-alpha-D-glucose + diphosphate. It participates in capsule biogenesis; capsule polysaccharide biosynthesis. It functions in the pathway glycan biosynthesis; glycogen biosynthesis. Involved in the biosynthesis of ADP-glucose, a building block, required in the biosynthesis of maltose-1-phosphate (M1P) and in the elongation reactions to produce linear alpha-1,4-glucans. Catalyzes the reaction between ATP and alpha-D-glucose 1-phosphate (G1P) to produce pyrophosphate and ADP-Glc. This is Glucose-1-phosphate adenylyltransferase from Mycobacterium bovis (strain ATCC BAA-935 / AF2122/97).